Here is a 949-residue protein sequence, read N- to C-terminus: ATPase 6, plasma membrane-type (949 aa).

The Cytoplasmic portion of the chain corresponds to Met-1 to Phe-64. A helical membrane pass occupies residues Leu-65–Ile-84. At Val-85–Trp-96 the chain is on the extracellular side. The helical transmembrane segment at Gln-97–Glu-117 threads the bilayer. At Asn-118–Ile-246 the chain is on the cytoplasmic side. A helical membrane pass occupies residues Gly-247–Pro-267. The Extracellular portion of the chain corresponds to Ile-268–Gly-276. The helical transmembrane segment at Ile-277–Thr-294 threads the bilayer. Residues Val-295–Lys-645 lie on the Cytoplasmic side of the membrane. Asp-332 serves as the catalytic 4-aspartylphosphate intermediate. Asp-590 and Asp-594 together coordinate Mg(2+). The chain crosses the membrane as a helical span at residues Asn-646 to Leu-667. Residues Ile-668 to Asp-672 are Extracellular-facing. A helical membrane pass occupies residues Phe-673–Asp-695. The Cytoplasmic portion of the chain corresponds to Arg-696 to Ile-711. Residues Phe-712–Leu-732 form a helical membrane-spanning segment. Topologically, residues Ala-733–Glu-753 are extracellular. Residues Glu-754–Thr-774 form a helical membrane-spanning segment. Topologically, residues Arg-775–Gly-786 are cytoplasmic. Residues Leu-787 to Ala-807 traverse the membrane as a helical segment. Residues His-808–Lys-815 lie on the Extracellular side of the membrane. A helical transmembrane segment spans residues Gly-816–Leu-836. Topologically, residues Asp-837–Val-949 are cytoplasmic. Residue Thr-883 is modified to Phosphothreonine. Ser-931 carries the post-translational modification Phosphoserine. The interval Tyr-947–Val-949 is interaction with 14-3-3 proteins. Phosphothreonine is present on Thr-948.

It belongs to the cation transport ATPase (P-type) (TC 3.A.3) family. Type IIIA subfamily. In terms of assembly, binds to 14-3-3 proteins. The binding is induced by phosphorylation of Thr-948. Binding to 14-3-3 proteins activates the H(+)-ATPase. As to expression, expressed in guard cells.

It is found in the membrane. It carries out the reaction ATP + H2O + H(+)(in) = ADP + phosphate + 2 H(+)(out). Its function is as follows. The plasma membrane H(+) ATPase of plants and fungi generates a proton gradient that drives the active transport of nutrients by H(+)-symport. The resulting external acidification and/or internal alkinization may mediate growth responses. This chain is ATPase 6, plasma membrane-type (AHA6), found in Arabidopsis thaliana (Mouse-ear cress).